The chain runs to 129 residues: Virion-associated protein (129 aa).

Coiled coils occupy residues 1 to 31 (MANLNQIQKEVSEILSDQKSMKADIKAILEL) and 38 to 59 (IKESLETVAAKIVNDLTKLIND). Positions 122–129 (PAGWPNQF) are capsid binding.

It belongs to the caulimovirus ORF III family. In terms of assembly, homotetramer, through coiled-coil domain. Homotrimer when bound on icosehadral capsid. Interacts with capsid protein, and with movement protein.

It localises to the virion. The protein localises to the host cell junction. Its subcellular location is the host plasmodesma. In terms of biological role, plays a role in virus cell-to-cell and plant-to-plant transmission. Interacts with virion icosahedral capsid and movement protein, thereby facilitating virion cell-to-cell transmission through plasmodesmata opened by viral movement protein. Also interacts with aphid transmission factor, attaching the virion to aphid stylet when the animal feeds on an virus infected plant. Aphid saliva may later detach the virion, inducing release of infectious particles when the animal feeds on a new plant. This Cauliflower mosaic virus (strain Strasbourg) (CaMV) protein is Virion-associated protein.